The chain runs to 235 residues: MTELARLKFYATQPHSCSYLPDEQATTLFLDPSQPMDVHVYADLSEMGFRRSGDHLYRPHCQNCNACVPARIPVAQFLPDRNQKRILKRNADLTVMPAKPRFTEEYFDLYQRYIEERHADGDMFPPSRDQFSTFLVRDLPFSRFYEFRADGRLVAVAVTDLLPNGLSAVYTFYEPAEERRSLGRFAILWQIGEALRQELEAVYLGYWIKNCKKMNYKTQYRPIELLINQRWVTLN.

The protein belongs to the R-transferase family. Bpt subfamily.

The protein resides in the cytoplasm. It carries out the reaction N-terminal L-glutamyl-[protein] + L-leucyl-tRNA(Leu) = N-terminal L-leucyl-L-glutamyl-[protein] + tRNA(Leu) + H(+). The enzyme catalyses N-terminal L-aspartyl-[protein] + L-leucyl-tRNA(Leu) = N-terminal L-leucyl-L-aspartyl-[protein] + tRNA(Leu) + H(+). Functionally, functions in the N-end rule pathway of protein degradation where it conjugates Leu from its aminoacyl-tRNA to the N-termini of proteins containing an N-terminal aspartate or glutamate. This chain is Aspartate/glutamate leucyltransferase, found in Pseudomonas fluorescens (strain SBW25).